The primary structure comprises 187 residues: Large ribosomal subunit protein uL6 (187 aa).

The segment at 151-170 (EAARIRSLRPPEPYKGKGIK) is disordered.

It belongs to the universal ribosomal protein uL6 family. In terms of assembly, part of the 50S ribosomal subunit.

This protein binds to the 23S rRNA, and is important in its secondary structure. It is located near the subunit interface in the base of the L7/L12 stalk, and near the tRNA binding site of the peptidyltransferase center. The polypeptide is Large ribosomal subunit protein uL6 (Chloroflexus aurantiacus (strain ATCC 29366 / DSM 635 / J-10-fl)).